The following is a 425-amino-acid chain: Histone-binding protein RBBP4 (425 aa).

Position 2 is an N-acetylalanine (Ala-2). The residue at position 4 (Lys-4) is an N6-acetyllysine; alternate. Lys-4 is covalently cross-linked (Glycyl lysine isopeptide (Lys-Gly) (interchain with G-Cter in SUMO2); alternate). Lys-4 participates in a covalent cross-link: Glycyl lysine isopeptide (Lys-Gly) (interchain with G-Cter in ubiquitin); alternate. WD repeat units follow at residues 32–125 (YDLV…NHEG), 126–175 (EVNR…RLRG), 176–223 (HQKE…KTIF), 225–270 (GHTA…HSVD), 271–314 (AHTA…HSFE), 315–371 (SHKD…FIHG), and 372–404 (GHTAKISDFSWNPNEPWVICSVSEDNIMQVWQM). Ser-110 bears the Phosphoserine mark. The residue at position 160 (Lys-160) is an N6-acetyllysine; alternate. Residue Lys-160 forms a Glycyl lysine isopeptide (Lys-Gly) (interchain with G-Cter in SUMO2); alternate linkage. The residue at position 355 (Ser-355) is a Phosphoserine.

This sequence belongs to the WD repeat RBAP46/RBAP48/MSI1 family. In terms of assembly, binds directly to helix 1 of the histone fold of histone H4, a region that is not accessible when H4 is in chromatin. Subunit of the chromatin assembly factor 1 (CAF-1) complex, which is composed of RBBP4, CHAF1B and CHAF1A. Subunit of the core histone deacetylase (HDAC) complex, which is composed of HDAC1, HDAC2, RBBP4 and RBBP7. The core HDAC complex associates with SIN3A, ARID4B/SAP180, SAP18, SAP30, SAP130, SUDS3/SAP45 and possibly ARID4A/RBP1 and ING1 to form the SIN3 HDAC complex. Component of the nucleosome remodeling and deacetylase (NuRD) repressor complex, composed of core proteins MTA1, MTA2, MTA3, RBBP4, RBBP7, HDAC1, HDAC2, MBD2, MBD3, and peripherally associated proteins CDK2AP1, CDK2AP2, GATAD2A, GATAD2B, CHD3, CHD4 and CHD5. The exact stoichiometry of the NuRD complex is unknown, and some subunits such as MBD2 and MBD3, GATAD2A and GATAD2B, and CHD3, CHD4 and CHD5 define mutually exclusive NuRD complexes. Interacts with ZNF512B; the interaction is direct and may play a role in repressing gene expression. The NuRD complex may also interact with MBD3L1 and MBD3L2. Component of the PRC2 complex, which consists of the core subunits EED, EZH1 or EZH2, SUZ12, and RBBP4, and various combinations of accessory subunits including AEBP2, JARID2, PHF19, MTF2 and EPOP. Forms a monomeric PRC2.2 (class 2) complex consisting of at least SUZ12, RBBP4, AEBP2 and JARID2. Forms a dimeric PRC2.1 (class 1, PRC-PCL) complex consisting of at least SUZ12, RBBP4, and PHF19; PHF19 stabilizes the dimeric structure which enhances PRC2 interaction with chromatin. Component of the NURF-1 ISWI chromatin remodeling complex (also called the nucleosome-remodeling factor (NURF) complex) at least composed of SMARCA1 (isoform 2), BPTF, RBBP4 and RBBP7. Within the complex interacts with isoform 2 of SMARCA1. Component of the BPFT-SMARCA1 complex at least composed of SMARCA1 (isoform 1), BPFT, RBBP4 and RBBP7; the complex is catalytically inactive and does not remodel chromatin. Within the complex interacts with isoform 1 of SMARCA1. Interacts with the ISWI chromatin remodeling complex component SMARCA5; the interaction is direct. Interacts with the viral protein-binding domain of the retinoblastoma protein (RB1). Component of the DREAM complex (also named LINC complex) at least composed of E2F4, E2F5, LIN9, LIN37, LIN52, LIN54, MYBL1, MYBL2, RBL1, RBL2, RBBP4, TFDP1 and TFDP2. The complex exists in quiescent cells where it represses cell cycle-dependent genes. It dissociates in S phase when LIN9, LIN37, LIN52 and LIN54 form a subcomplex that binds to MYBL2. Found in a complex composed of at least SINHCAF, SIN3A, HDAC1, SAP30, RBBP4, OGT and TET1. Interacts with ZNF827; the interaction is direct and recruits RBBP4 to telomeres. Interacts with MTA1; the interaction is direct and mutually exclusive with binding histone H4. Interacts with ARMC12 (via ARM domains). Interacts with BRCA1. Interacts with CDK2AP1. Interacts with CREBBP, and this interaction may be enhanced by the binding of phosphorylated CREB1 to CREBBP. Interacts with ERCC6. Interacts with HDAC7. Interacts with PHF6. Interacts with PWWP2B. Interacts with SPEN/MINT. Interacts with SUV39H1.

It localises to the nucleus. Its subcellular location is the chromosome. The protein resides in the telomere. Core histone-binding subunit that may target chromatin assembly factors, chromatin remodeling factors and histone deacetylases to their histone substrates in a manner that is regulated by nucleosomal DNA. Component of the chromatin assembly factor 1 (CAF-1) complex, which is required for chromatin assembly following DNA replication and DNA repair. Component of the core histone deacetylase (HDAC) complex, which promotes histone deacetylation and consequent transcriptional repression. Component of the nucleosome remodeling and histone deacetylase complex (the NuRD complex), which promotes transcriptional repression by histone deacetylation and nucleosome remodeling. Component of the PRC2 complex, which promotes repression of homeotic genes during development. Component of the NURF (nucleosome remodeling factor) complex. The protein is Histone-binding protein RBBP4 (RBBP4) of Pongo abelii (Sumatran orangutan).